The following is a 462-amino-acid chain: Transcription initiation factor TFIID subunit 7-like (462 aa).

2 disordered regions span residues 1-97 (MECP…VPDE) and 327-366 (DSRS…SEEY). Composition is skewed to low complexity over residues 16 to 30 (STPT…SQQE) and 66 to 77 (DADSSAQAAAQA). The segment covering 333–365 (DDDEDEDDEDEDEDEDEDEDEDKEEEEEDCSEE) has biased composition (acidic residues). Positions 342 to 462 (DEDEDEDEDE…QEQLQRFLKK (121 aa)) form a coiled coil.

Belongs to the TAF7 family. In terms of assembly, TFIID is composed of TATA binding protein (TBP) and a number of TBP-associated factors (TAFs). TAF7L may replace TAF7 in a spermatogenesis-specific form of TFIID. Interacts with TBP; the interaction occurs in a sub-population of cells (pachytene and haploid round spermatids) and is developmentally regulated through differential intracellular localization of the two proteins. Interacts with TAF1. As to expression, testis-specific.

It is found in the nucleus. It localises to the cytoplasm. Functionally, probably functions as a spermatogenesis-specific component of the DNA-binding general transcription factor complex TFIID, a multimeric protein complex that plays a central role in mediating promoter responses to various activators and repressors. May play a role in spermatogenesis. The protein is Transcription initiation factor TFIID subunit 7-like (TAF7L) of Homo sapiens (Human).